Consider the following 227-residue polypeptide: UPF0758 protein lpl2409 (227 aa).

Residues 102-225 (RLSNTQQTYA…YSIFAENKWA (124 aa)) form the MPN domain. 3 residues coordinate Zn(2+): H173, H175, and D186. The short motif at 173–186 (HNHPSGLSDASQQD) is the JAMM motif element.

This sequence belongs to the UPF0758 family.

This is UPF0758 protein lpl2409 from Legionella pneumophila (strain Lens).